A 429-amino-acid chain; its full sequence is Serine--tRNA ligase (429 aa).

Position 236–238 (236–238 (TAE)) interacts with L-serine. 267 to 269 (RSE) is a binding site for ATP. Glu290 provides a ligand contact to L-serine. Residue 354–357 (EISS) coordinates ATP. Ser390 contributes to the L-serine binding site.

The protein belongs to the class-II aminoacyl-tRNA synthetase family. Type-1 seryl-tRNA synthetase subfamily. As to quaternary structure, homodimer. The tRNA molecule binds across the dimer.

The protein resides in the cytoplasm. The catalysed reaction is tRNA(Ser) + L-serine + ATP = L-seryl-tRNA(Ser) + AMP + diphosphate + H(+). The enzyme catalyses tRNA(Sec) + L-serine + ATP = L-seryl-tRNA(Sec) + AMP + diphosphate + H(+). The protein operates within aminoacyl-tRNA biosynthesis; selenocysteinyl-tRNA(Sec) biosynthesis; L-seryl-tRNA(Sec) from L-serine and tRNA(Sec): step 1/1. Its function is as follows. Catalyzes the attachment of serine to tRNA(Ser). Is also able to aminoacylate tRNA(Sec) with serine, to form the misacylated tRNA L-seryl-tRNA(Sec), which will be further converted into selenocysteinyl-tRNA(Sec). In Alcanivorax borkumensis (strain ATCC 700651 / DSM 11573 / NCIMB 13689 / SK2), this protein is Serine--tRNA ligase.